The primary structure comprises 315 residues: Olfactory receptor 10H5 (315 aa).

Residues 1-25 lie on the Extracellular side of the membrane; sequence MQGLNHTSVSEFILVGFSAFPHLQL. N-linked (GlcNAc...) asparagine glycosylation is present at asparagine 5. Residues 26–46 form a helical membrane-spanning segment; the sequence is MLFLLFLLMYLFTLLGNLLIM. The Cytoplasmic portion of the chain corresponds to 47–54; that stretch reads ATVWSERS. Residues 55 to 75 traverse the membrane as a helical segment; it reads LHMPMYLFLCALSITEILYTV. The Extracellular segment spans residues 76 to 99; that stretch reads AIIPRMLADLLSTQRSIAFLACAS. Cysteines 97 and 189 form a disulfide. Residues 100-120 traverse the membrane as a helical segment; it reads QMFFSFSFGFTHSFLLTVMGY. Residues 121-139 are Cytoplasmic-facing; sequence DRYVAICHPLRYNVLMSLR. The helical transmembrane segment at 140–160 threads the bilayer; the sequence is GCTCRVGCSWAGGLVMGMVVT. Over 161-197 the chain is Extracellular; it reads SAIFHLAFCGHKEIHHFFCHVPPLLKLACGDDVLVVA. The helical transmembrane segment at 198–218 threads the bilayer; the sequence is KGVGLVCITALLGCFLLILLS. The Cytoplasmic portion of the chain corresponds to 219–238; that stretch reads YAFIVAAILKIPSAEGRNKA. A helical transmembrane segment spans residues 239–259; sequence FSTCASHLTVVVVHYGFASVI. The Extracellular segment spans residues 260–272; that stretch reads YLKPKGPQSPEGD. A helical transmembrane segment spans residues 273 to 293; it reads TLMGITYTVLTPFLSPIIFSL. At 294–315 the chain is on the cytoplasmic side; it reads RNKELKVAMKKTCFTKLFPQNC.

It belongs to the G-protein coupled receptor 1 family.

It localises to the cell membrane. In terms of biological role, odorant receptor. This chain is Olfactory receptor 10H5 (OR10H5), found in Homo sapiens (Human).